Here is a 320-residue protein sequence, read N- to C-terminus: Biotin synthase (320 aa).

In terms of domain architecture, Radical SAM core spans Asn46–Arg275. The [4Fe-4S] cluster site is built by Cys64, Cys68, and Cys71. [2Fe-2S] cluster is bound by residues Ser108, Cys140, Cys200, and Arg270.

Belongs to the radical SAM superfamily. Biotin synthase family. In terms of assembly, homodimer. [4Fe-4S] cluster serves as cofactor. Requires [2Fe-2S] cluster as cofactor.

It carries out the reaction (4R,5S)-dethiobiotin + (sulfur carrier)-SH + 2 reduced [2Fe-2S]-[ferredoxin] + 2 S-adenosyl-L-methionine = (sulfur carrier)-H + biotin + 2 5'-deoxyadenosine + 2 L-methionine + 2 oxidized [2Fe-2S]-[ferredoxin]. The protein operates within cofactor biosynthesis; biotin biosynthesis; biotin from 7,8-diaminononanoate: step 2/2. Functionally, catalyzes the conversion of dethiobiotin (DTB) to biotin by the insertion of a sulfur atom into dethiobiotin via a radical-based mechanism. In Acetivibrio thermocellus (strain ATCC 27405 / DSM 1237 / JCM 9322 / NBRC 103400 / NCIMB 10682 / NRRL B-4536 / VPI 7372) (Clostridium thermocellum), this protein is Biotin synthase.